The following is a 630-amino-acid chain: Phosphomethylpyrimidine synthase (630 aa).

Substrate-binding positions include N227, M256, Y285, H321, 341 to 343 (SRG), 382 to 385 (DGLR), and E421. H425 contributes to the Zn(2+) binding site. Y448 contacts substrate. H489 serves as a coordination point for Zn(2+). Residues C569, C572, and C577 each coordinate [4Fe-4S] cluster.

The protein belongs to the ThiC family. In terms of assembly, homodimer. [4Fe-4S] cluster serves as cofactor.

The enzyme catalyses 5-amino-1-(5-phospho-beta-D-ribosyl)imidazole + S-adenosyl-L-methionine = 4-amino-2-methyl-5-(phosphooxymethyl)pyrimidine + CO + 5'-deoxyadenosine + formate + L-methionine + 3 H(+). The protein operates within cofactor biosynthesis; thiamine diphosphate biosynthesis. In terms of biological role, catalyzes the synthesis of the hydroxymethylpyrimidine phosphate (HMP-P) moiety of thiamine from aminoimidazole ribotide (AIR) in a radical S-adenosyl-L-methionine (SAM)-dependent reaction. In Hydrogenovibrio crunogenus (strain DSM 25203 / XCL-2) (Thiomicrospira crunogena), this protein is Phosphomethylpyrimidine synthase.